We begin with the raw amino-acid sequence, 393 residues long: RNA polymerase II holoenzyme cyclin-like subunit (393 aa).

In terms of domain architecture, Cyclin N-terminal spans 51-146 (ICKRLNLRQR…LLEEMEFDMV (96 aa)).

Belongs to the cyclin family. Cyclin C subfamily. As to quaternary structure, component of the SRB8-11 complex, a regulatory module of the Mediator complex.

The protein localises to the nucleus. Functionally, component of the SRB8-11 complex. The SRB8-11 complex is a regulatory module of the Mediator complex which is itself involved in regulation of basal and activated RNA polymerase II-dependent transcription. The SRB8-11 complex may be involved in the transcriptional repression of a subset of genes regulated by Mediator. It may inhibit the association of the Mediator complex with RNA polymerase II to form the holoenzyme complex. The SRB8-11 complex phosphorylates the C-terminal domain (CTD) of the largest subunit of RNA polymerase II. The polypeptide is RNA polymerase II holoenzyme cyclin-like subunit (SSN8) (Mycosarcoma maydis (Corn smut fungus)).